The following is a 131-amino-acid chain: Small ribosomal subunit protein uS8 (131 aa).

The protein belongs to the universal ribosomal protein uS8 family. In terms of assembly, part of the 30S ribosomal subunit. Contacts proteins S5 and S12.

One of the primary rRNA binding proteins, it binds directly to 16S rRNA central domain where it helps coordinate assembly of the platform of the 30S subunit. This Legionella pneumophila subsp. pneumophila (strain Philadelphia 1 / ATCC 33152 / DSM 7513) protein is Small ribosomal subunit protein uS8.